We begin with the raw amino-acid sequence, 398 residues long: 1-aminocyclopropane-1-carboxylate oxidase homolog 5 (398 aa).

One can recognise a Fe2OG dioxygenase domain in the interval 247-347 (KSHIMFGQYY…RISMPCFVST (101 aa)). His-271, Asp-273, and His-327 together coordinate Fe cation. A 2-oxoglutarate-binding site is contributed by Arg-338.

The protein belongs to the iron/ascorbate-dependent oxidoreductase family. It depends on Fe(2+) as a cofactor. In terms of tissue distribution, expressed in etiolated seedlings, leaves, stems and flowers.

The polypeptide is 1-aminocyclopropane-1-carboxylate oxidase homolog 5 (2A6) (Arabidopsis thaliana (Mouse-ear cress)).